The sequence spans 430 residues: GTPase Obg (430 aa).

Residues 1–158 form the Obg domain; it reads MFIDTAKVFV…LNIVLELKLL (158 aa). The OBG-type G domain occupies 159–331; the sequence is ADVGLLGFPN…VMKEAARILK (173 aa). Residues 165–172, 190–194, 212–215, 282–285, and 312–314 contribute to the GTP site; these read GFPNVGKS, FTTLK, DIPG, NKSD, and SAA. Residues Ser-172 and Thr-192 each contribute to the Mg(2+) site. The region spanning 345-430 is the OCT domain; sequence MYIPEEKRFT…LNDFEFEYIL (86 aa).

It belongs to the TRAFAC class OBG-HflX-like GTPase superfamily. OBG GTPase family. In terms of assembly, monomer. The cofactor is Mg(2+).

It localises to the cytoplasm. An essential GTPase which binds GTP, GDP and possibly (p)ppGpp with moderate affinity, with high nucleotide exchange rates and a fairly low GTP hydrolysis rate. Plays a role in control of the cell cycle, stress response, ribosome biogenesis and in those bacteria that undergo differentiation, in morphogenesis control. The sequence is that of GTPase Obg from Clostridium beijerinckii (strain ATCC 51743 / NCIMB 8052) (Clostridium acetobutylicum).